Consider the following 393-residue polypeptide: NAD(P)H-quinone oxidoreductase subunit H, chloroplastic (393 aa).

The protein belongs to the complex I 49 kDa subunit family. As to quaternary structure, NDH is composed of at least 16 different subunits, 5 of which are encoded in the nucleus.

The protein localises to the plastid. The protein resides in the chloroplast thylakoid membrane. The catalysed reaction is a plastoquinone + NADH + (n+1) H(+)(in) = a plastoquinol + NAD(+) + n H(+)(out). It carries out the reaction a plastoquinone + NADPH + (n+1) H(+)(in) = a plastoquinol + NADP(+) + n H(+)(out). In terms of biological role, NDH shuttles electrons from NAD(P)H:plastoquinone, via FMN and iron-sulfur (Fe-S) centers, to quinones in the photosynthetic chain and possibly in a chloroplast respiratory chain. The immediate electron acceptor for the enzyme in this species is believed to be plastoquinone. Couples the redox reaction to proton translocation, and thus conserves the redox energy in a proton gradient. In Platanus occidentalis (Sycamore), this protein is NAD(P)H-quinone oxidoreductase subunit H, chloroplastic.